The primary structure comprises 338 residues: Ornithine carbamoyltransferase (338 aa).

Carbamoyl phosphate contacts are provided by residues R116 and 143–146 (HPCQ). Residues N174, D235, and 239–240 (SM) contribute to the L-ornithine site. Carbamoyl phosphate contacts are provided by C275 and R303.

The protein belongs to the aspartate/ornithine carbamoyltransferase superfamily. OTCase family.

It is found in the cytoplasm. It carries out the reaction carbamoyl phosphate + L-ornithine = L-citrulline + phosphate + H(+). The protein operates within amino-acid biosynthesis; L-arginine biosynthesis; L-arginine from L-ornithine and carbamoyl phosphate: step 1/3. Its function is as follows. Reversibly catalyzes the transfer of the carbamoyl group from carbamoyl phosphate (CP) to the N(epsilon) atom of ornithine (ORN) to produce L-citrulline. In Chlorobaculum tepidum (strain ATCC 49652 / DSM 12025 / NBRC 103806 / TLS) (Chlorobium tepidum), this protein is Ornithine carbamoyltransferase.